Here is a 432-residue protein sequence, read N- to C-terminus: Glyceraldehyde-3-phosphate dehydrogenase, testis-specific (432 aa).

The segment at 1–97 (MSRRDVVLTN…PPPPPPPKPA (97 aa)) is testis-specific N-terminal extension. Positions 40–101 (PPPPKVEEPP…PPPKPAKELT (62 aa)) are disordered. Basic and acidic residues predominate over residues 44 to 55 (KVEEPPPPKEEP). Composition is skewed to pro residues over residues 56–67 (PPPPPPPPPPQI) and 75–95 (APPP…PPPK). NAD(+)-binding positions include 109–110 (RI), Asp130, Lys175, Tyr197, and Thr217. Residues 247–249 (SCT), Thr278, 307–308 (TG), and Arg330 contribute to the D-glyceraldehyde 3-phosphate site. The active-site Nucleophile is the Cys248. Position 350 is a phosphoserine (Ser350). An NAD(+)-binding site is contributed by Asn412.

Belongs to the glyceraldehyde-3-phosphate dehydrogenase family. Homotetramer. Expressed in both head and flagellum of epididymal sperm.

The protein resides in the cytoplasm. It carries out the reaction D-glyceraldehyde 3-phosphate + phosphate + NAD(+) = (2R)-3-phospho-glyceroyl phosphate + NADH + H(+). It participates in carbohydrate degradation; glycolysis; pyruvate from D-glyceraldehyde 3-phosphate: step 1/5. May play an important role in regulating the switch between different pathways for energy production during spermiogenesis and in the spermatozoon. Required for sperm motility and male fertility. This Rattus norvegicus (Rat) protein is Glyceraldehyde-3-phosphate dehydrogenase, testis-specific (Gapdhs).